We begin with the raw amino-acid sequence, 414 residues long: Serine/threonine transporter SstT (414 aa).

8 helical membrane-spanning segments follow: residues 16-36 (GSLV…AWIS), 46-66 (LGTL…LMLV), 84-104 (ILFL…VFSF), 143-163 (ALLN…GFAL), 180-200 (AVTF…FGLV), 219-239 (LVVL…LLVF), 300-320 (MAGA…TLGV), and 332-352 (VVAS…LLLI).

The protein belongs to the dicarboxylate/amino acid:cation symporter (DAACS) (TC 2.A.23) family.

It is found in the cell inner membrane. It carries out the reaction L-serine(in) + Na(+)(in) = L-serine(out) + Na(+)(out). The enzyme catalyses L-threonine(in) + Na(+)(in) = L-threonine(out) + Na(+)(out). Its function is as follows. Involved in the import of serine and threonine into the cell, with the concomitant import of sodium (symport system). The chain is Serine/threonine transporter SstT from Salmonella dublin (strain CT_02021853).